Reading from the N-terminus, the 178-residue chain is Thioredoxin F1, chloroplastic (178 aa).

Residues 1–22 (MPLSLRLSPSPTALSPTTGGFG) form a disordered region. A chloroplast-targeting transit peptide spans 1 to 57 (MPLSLRLSPSPTALSPTTGGFGPSRKQCRIPYSGVPTTKIGFCSLDSRKRGDSSVVR). Residues 7–18 (LSPSPTALSPTT) are compositionally biased toward polar residues. The region spanning 58–174 (CSLETVNVSV…LVAAIETARS (117 aa)) is the Thioredoxin domain. Catalysis depends on nucleophile residues Cys-99 and Cys-102. Cys-99 and Cys-102 are disulfide-bonded. S-glutathionyl cysteine; transient is present on Cys-126.

It belongs to the thioredoxin family. Plant F-type subfamily. Post-translationally, glutathionylation at Cys-126 decreases its ability to be reduced by ferredoxin-thioredoxin reductase and reduces its efficiency in activating target chloroplastic enzymes.

It is found in the plastid. The protein resides in the chloroplast stroma. Functionally, thiol-disulfide oxidoreductase involved in the redox regulation of enzymes of both reductive pentose phosphate pathway (Calvin-Benson cycle) and oxidative pentose phosphate pathway. Under light or reducing conditions, activates in chloroplast the glyceraldehyde-3-phosphate dehydrogenase, the phosphoribulokinase and the fructose-1,6-bisphosphate phosphatase, and inhibits the glucose-6-phosphate dehydrogenase. The sequence is that of Thioredoxin F1, chloroplastic from Arabidopsis thaliana (Mouse-ear cress).